The chain runs to 782 residues: E3 UFM1-protein ligase 1 homolog (782 aa).

The tract at residues 405 to 478 is disordered; that stretch reads VSTQELEDDG…TRGGGGASKK (74 aa).

This sequence belongs to the UFL1 family.

In terms of biological role, E3 UFM1-protein ligase that mediates ufmylation of target proteins. This Drosophila sechellia (Fruit fly) protein is E3 UFM1-protein ligase 1 homolog.